A 115-amino-acid polypeptide reads, in one-letter code: NAD(P)H-quinone oxidoreductase subunit M (115 aa).

This sequence belongs to the complex I NdhM subunit family. NDH-1 can be composed of about 15 different subunits; different subcomplexes with different compositions have been identified which probably have different functions.

The protein localises to the cellular thylakoid membrane. The catalysed reaction is a plastoquinone + NADH + (n+1) H(+)(in) = a plastoquinol + NAD(+) + n H(+)(out). It carries out the reaction a plastoquinone + NADPH + (n+1) H(+)(in) = a plastoquinol + NADP(+) + n H(+)(out). Functionally, NDH-1 shuttles electrons from an unknown electron donor, via FMN and iron-sulfur (Fe-S) centers, to quinones in the respiratory and/or the photosynthetic chain. The immediate electron acceptor for the enzyme in this species is believed to be plastoquinone. Couples the redox reaction to proton translocation, and thus conserves the redox energy in a proton gradient. Cyanobacterial NDH-1 also plays a role in inorganic carbon-concentration. In Prochlorococcus marinus (strain MIT 9301), this protein is NAD(P)H-quinone oxidoreductase subunit M.